We begin with the raw amino-acid sequence, 463 residues long: Cysteine--tRNA ligase (463 aa).

Zn(2+) is bound at residue C33. The short motif at P35–N45 is the 'HIGH' region element. Zn(2+) is bound by residues C221, H246, and E250. Positions K279–S283 match the 'KMSKS' region motif. K282 lines the ATP pocket.

Belongs to the class-I aminoacyl-tRNA synthetase family. Monomer. Zn(2+) is required as a cofactor.

The protein localises to the cytoplasm. The catalysed reaction is tRNA(Cys) + L-cysteine + ATP = L-cysteinyl-tRNA(Cys) + AMP + diphosphate. The protein is Cysteine--tRNA ligase of Rhizobium rhizogenes (strain K84 / ATCC BAA-868) (Agrobacterium radiobacter).